A 199-amino-acid polypeptide reads, in one-letter code: Chaperone protein TorD (199 aa).

Belongs to the TorD/DmsD family. TorD subfamily.

Its subcellular location is the cytoplasm. Involved in the biogenesis of TorA. Acts on TorA before the insertion of the molybdenum cofactor and, as a result, probably favors a conformation of the apoenzyme that is competent for acquiring the cofactor. The chain is Chaperone protein TorD from Actinobacillus pleuropneumoniae serotype 3 (strain JL03).